A 400-amino-acid chain; its full sequence is CCA-adding enzyme (400 aa).

Residues glycine 27 and arginine 30 each contribute to the ATP site. Residues glycine 27 and arginine 30 each coordinate CTP. Mg(2+)-binding residues include aspartate 40 and aspartate 42. ATP is bound by residues arginine 111, aspartate 154, arginine 157, arginine 160, and arginine 163. Arginine 111, aspartate 154, arginine 157, arginine 160, and arginine 163 together coordinate CTP.

The protein belongs to the tRNA nucleotidyltransferase/poly(A) polymerase family. Bacterial CCA-adding enzyme type 3 subfamily. Homodimer. Requires Mg(2+) as cofactor.

It carries out the reaction a tRNA precursor + 2 CTP + ATP = a tRNA with a 3' CCA end + 3 diphosphate. The enzyme catalyses a tRNA with a 3' CCA end + 2 CTP + ATP = a tRNA with a 3' CCACCA end + 3 diphosphate. Catalyzes the addition and repair of the essential 3'-terminal CCA sequence in tRNAs without using a nucleic acid template. Adds these three nucleotides in the order of C, C, and A to the tRNA nucleotide-73, using CTP and ATP as substrates and producing inorganic pyrophosphate. tRNA 3'-terminal CCA addition is required both for tRNA processing and repair. Also involved in tRNA surveillance by mediating tandem CCA addition to generate a CCACCA at the 3' terminus of unstable tRNAs. While stable tRNAs receive only 3'-terminal CCA, unstable tRNAs are marked with CCACCA and rapidly degraded. The polypeptide is CCA-adding enzyme (Bacillus pumilus (strain SAFR-032)).